Reading from the N-terminus, the 107-residue chain is Disintegrin lebestatin (107 aa).

The first 20 residues, 1–20 (MIQVLLVIICLAVFPFQGSS), serve as a signal peptide directing secretion. The propeptide occupies 21-64 (KTLKSGNVNDYEVVNPGTVTGLPKGAVEEKHEPMKGNTLQKFPL). 4 disulfides stabilise this stretch: C65–C74, C70–C93, C71–C98, and C83–C100. Residues 65-105 (CTTGPCCRQCKLKPAGTTCWKTSRTSHYCTGKSCDCPSYPG) form the Disintegrin domain. The Cell attachment site; atypical (KTS) motif lies at 85-87 (KTS). Positions 106 to 107 (NG) are excised as a propeptide.

In terms of assembly, monomer. Expressed by the venom gland.

Its subcellular location is the secreted. Specifically interacts with the alpha-1/beta-1 integrin (ITGA1/ITGB1). Exhibits highly inhibitory effects on cell adhesion and cell migration to collagens I and IV. Also shows in vivo anti-angiogenic activity. The polypeptide is Disintegrin lebestatin (Macrovipera lebetinus (Levantine viper)).